The following is a 215-amino-acid chain: Porin MspC (215 aa).

The first 31 residues, 1–31, serve as a signal peptide directing secretion; that stretch reads MKAISRVLIAMISALAAAVAGLFVSAGTSHA.

The protein belongs to the mycobacterial porin (TC 1.B.24) family. In terms of assembly, octamers. Probably forms a goblet with the wide end on the exterior of the outer membrane and a central channel. It is not known if mixed oligomers of MspC with other Msp subunits form in vivo.

Its subcellular location is the cell outer membrane. The protein resides in the secreted. It is found in the cell wall. Its function is as follows. A constitutively expressed secondary porin, forms a water-filled channel which favors the permeation of cations and less efficiently phosphate. There are about 2400 porins in wild-type, 800 in an mspA deletion and 150 in a double mspA-mspC deletion. This is Porin MspC (mspC) from Mycolicibacterium smegmatis (strain ATCC 700084 / mc(2)155) (Mycobacterium smegmatis).